Consider the following 577-residue polypeptide: External alternative NAD(P)H-ubiquinone oxidoreductase B1, mitochondrial (577 aa).

A mitochondrion-targeting transit peptide spans 1 to 35 (MRGFTYLSKVLHSHSSYSKLLVLCSVSTGGLLVYA). An FAD-binding site is contributed by 57–87 (RVVVLGTGWGGTSFLKDVDISSYDVQVVSPR). NAD(+) is bound at residue 221–257 (LHFVIVGGGPTGVEFAAELHDYVYEDLVKIYPSVKDF). In terms of domain architecture, EF-hand spans 378–413 (KVMEDISAIFKAADKDDSGTLSIEEFRDVLEDIIIR). D391, D393, S395, T397, and E402 together coordinate Ca(2+). The Microbody targeting signal signature appears at 568-577 (YIFGRDSSRI).

It belongs to the NADH dehydrogenase family. It depends on FAD as a cofactor.

It is found in the mitochondrion inner membrane. Its subcellular location is the peroxisome. The enzyme catalyses a quinone + NADH + H(+) = a quinol + NAD(+). It carries out the reaction a ubiquinone + NADH + H(+) = a ubiquinol + NAD(+). Its activity is regulated as follows. Activity is calcium-dependent with a more pronounced effect at higher pH. In terms of biological role, alternative NADH-ubiquinone oxidoreductase which catalyzes the oxidation of mitochondrial NADH does not translocate protons across the inner mitochondrial membrane. Calcium-dependent NAD(P)H dehydrogenase. Binds calcium ions. The sequence is that of External alternative NAD(P)H-ubiquinone oxidoreductase B1, mitochondrial (NDB1) from Solanum tuberosum (Potato).